The following is a 525-amino-acid chain: GMP synthase [glutamine-hydrolyzing] (525 aa).

The Glutamine amidotransferase type-1 domain maps to 9-207 (RILILDFGSQ…VKEICHCEAL (199 aa)). Cys-86 functions as the Nucleophile in the catalytic mechanism. Active-site residues include His-181 and Glu-183. The GMPS ATP-PPase domain maps to 208-400 (WTPATIIEDA…LGLPYNMLYR (193 aa)). Residue 235 to 241 (SGGVDSS) coordinates ATP.

Homodimer.

It carries out the reaction XMP + L-glutamine + ATP + H2O = GMP + L-glutamate + AMP + diphosphate + 2 H(+). It functions in the pathway purine metabolism; GMP biosynthesis; GMP from XMP (L-Gln route): step 1/1. Catalyzes the synthesis of GMP from XMP. In Tolumonas auensis (strain DSM 9187 / NBRC 110442 / TA 4), this protein is GMP synthase [glutamine-hydrolyzing].